A 218-amino-acid chain; its full sequence is Phosphoenolpyruvate guanylyltransferase (218 aa).

Positions 151, 166, and 169 each coordinate phosphoenolpyruvate.

It belongs to the CofC family.

It carries out the reaction phosphoenolpyruvate + GTP + H(+) = enolpyruvoyl-2-diphospho-5'-guanosine + diphosphate. It functions in the pathway cofactor biosynthesis; coenzyme F420 biosynthesis. In terms of biological role, guanylyltransferase that catalyzes the activation of phosphoenolpyruvate (PEP) as enolpyruvoyl-2-diphospho-5'-guanosine, via the condensation of PEP with GTP. It is involved in the biosynthesis of coenzyme F420, a hydride carrier cofactor. This is Phosphoenolpyruvate guanylyltransferase from Mycobacterium sp. (strain KMS).